Here is a 351-residue protein sequence, read N- to C-terminus: Dihydroorotate dehydrogenase (quinone) (351 aa).

Residues 61–65 (AGLDK) and Thr85 contribute to the FMN site. Lys65 is a binding site for substrate. 110–114 (NRMGF) serves as a coordination point for substrate. 2 residues coordinate FMN: Asn139 and Asn172. Asn172 contacts substrate. The active-site Nucleophile is the Ser175. Asn177 is a substrate binding site. 2 residues coordinate FMN: Lys217 and Thr245. 246 to 247 (NT) is a binding site for substrate. Residues Gly268, Gly297, and 318–319 (YT) each bind FMN.

It belongs to the dihydroorotate dehydrogenase family. Type 2 subfamily. As to quaternary structure, monomer. FMN is required as a cofactor.

Its subcellular location is the cell membrane. The enzyme catalyses (S)-dihydroorotate + a quinone = orotate + a quinol. It functions in the pathway pyrimidine metabolism; UMP biosynthesis via de novo pathway; orotate from (S)-dihydroorotate (quinone route): step 1/1. Its function is as follows. Catalyzes the conversion of dihydroorotate to orotate with quinone as electron acceptor. In Xylella fastidiosa (strain M12), this protein is Dihydroorotate dehydrogenase (quinone).